The following is a 496-amino-acid chain: Cobyric acid synthase (496 aa).

The region spanning 264–458 (HTRIAVVAYP…LHGLFEDAAV (195 aa)) is the GATase cobBQ-type domain. C345 (nucleophile) is an active-site residue. Residue H450 is part of the active site.

It belongs to the CobB/CobQ family. CobQ subfamily.

The protein operates within cofactor biosynthesis; adenosylcobalamin biosynthesis. Catalyzes amidations at positions B, D, E, and G on adenosylcobyrinic A,C-diamide. NH(2) groups are provided by glutamine, and one molecule of ATP is hydrogenolyzed for each amidation. The protein is Cobyric acid synthase of Acidovorax ebreus (strain TPSY) (Diaphorobacter sp. (strain TPSY)).